Consider the following 249-residue polypeptide: MKSLKKLKELETSDVFNILHVRTILKVIKIDKCISLARHPLVNITVGDDGIWFHLEDGTMINGLEYKTICEKELGFQGFIGIIILDSEDTLQELRLNPFQFKRRLIHMKVDTPEEFMLCGLVFALENLPLKQSTLHKLIAKLVLFPALSPITKILFNTCDTLVCTLRHIFFNEHASEILHKVPLMIRLYNEMKNTHIEVLELYFNTKRSHNFINLSLESRQLQDSSLQVIQLATQFAQTFYSKNGDTSS.

This sequence belongs to the herpesviridae cytoplasmic envelopment protein 1 family.

It localises to the virion. The protein localises to the virion tegument. Its subcellular location is the host cytoplasm. The protein resides in the host Golgi apparatus. Plays a critical role in cytoplasmic virus egress. Participates in the final step of tegumentation and envelope acquisition within the host cytoplasm. In Human herpesvirus 6A (strain Uganda-1102) (HHV-6 variant A), this protein is Cytoplasmic envelopment protein 1 (U75).